A 357-amino-acid chain; its full sequence is MFDQLESIVGRYEELGELLSDPEVVSDTKRFMELSREEADLRDKVATYNEYKKVLETISDSEEMLGEGGLDDEMKEMLKEELSSAKSQKEVLEEEIKILLLPKDPNDGKNIILEIRGAAGGDEAALFAGDLLNMYQHFSESQGWKFEIMEANITGIGGYKEVSALISGPSVYSKLKYESGAHRVQRVPVTETQGRVHTSTATVLVMPEVEEFEMTIEQKDLRVDIYHASGAGGQNVNKVATAVRMVHLPTGIKVEMQEERTQQKNRDKAIKLLNTKVFDYYQQIELDKQNAERKSTVGTGDRSERIRTYNFPQNRVTDHRIGLTLQKLDSILSGKMDEVIDALIVYDQTKKLEELNK.

Glutamine 234 carries the N5-methylglutamine modification.

Belongs to the prokaryotic/mitochondrial release factor family. Post-translationally, methylated by PrmC. Methylation increases the termination efficiency of RF1.

It localises to the cytoplasm. In terms of biological role, peptide chain release factor 1 directs the termination of translation in response to the peptide chain termination codons UAG and UAA. This chain is Peptide chain release factor 1, found in Lactococcus lactis subsp. cremoris (strain SK11).